The primary structure comprises 630 residues: Kelch-like protein 14 (630 aa).

Residues cysteine 33 to leucine 153 enclose the BTB domain. Positions glycine 69–leucine 117 are disordered. The segment covering glutamine 84 to glutamine 96 has biased composition (low complexity). In terms of domain architecture, BACK spans valine 212–glutamine 281. 6 Kelch repeats span residues methionine 325–asparagine 374, phenylalanine 375–lysine 426, histidine 427–glycine 473, isoleucine 475–aspartate 520, leucine 522–aspartate 572, and isoleucine 574–leucine 622.

Interacts with TOR1A. In terms of tissue distribution, expressed in the brain, primarily in neurons. In the cerebral cortex, mostly expressed in layers I and II (at protein level). Also observed in some neurons of the corpus striatum (at protein level). Expressed at high levels in the hippocampus, including in pyramidal cells of the CA1 and CA3 layers (at protein level). In the cerebellum, expression in Purkinje cells is higher than in granular cells (at protein level). Also detected in the medial septum, ventral pallidum, thalamus, hypothalamus, amygdala, inferior colliculi, locus caeruleus, peripyramidal nucleus, raphe nucleus, reticular formation, spinal trigeminal nucleus, and vestibular nuclei (at protein level). Low expression, if any, in glial cells (at protein level). Not observed in the corpus callosum.

It localises to the cytoplasm. The protein localises to the cytosol. The protein resides in the endoplasmic reticulum membrane. This is Kelch-like protein 14 (Klhl14) from Mus musculus (Mouse).